A 144-amino-acid polypeptide reads, in one-letter code: Large ribosomal subunit protein uL13 (144 aa).

This sequence belongs to the universal ribosomal protein uL13 family. Part of the 50S ribosomal subunit.

Functionally, this protein is one of the early assembly proteins of the 50S ribosomal subunit, although it is not seen to bind rRNA by itself. It is important during the early stages of 50S assembly. In Moorella thermoacetica (strain ATCC 39073 / JCM 9320), this protein is Large ribosomal subunit protein uL13.